The primary structure comprises 613 residues: Dihydroxy-acid dehydratase (613 aa).

Position 81 (Asp81) interacts with Mg(2+). Cys122 is a binding site for [2Fe-2S] cluster. 2 residues coordinate Mg(2+): Asp123 and Lys124. The residue at position 124 (Lys124) is an N6-carboxylysine. Residue Cys195 participates in [2Fe-2S] cluster binding. Residue Glu491 participates in Mg(2+) binding. The active-site Proton acceptor is Ser517.

Belongs to the IlvD/Edd family. Homodimer. [2Fe-2S] cluster serves as cofactor. Requires Mg(2+) as cofactor.

It carries out the reaction (2R)-2,3-dihydroxy-3-methylbutanoate = 3-methyl-2-oxobutanoate + H2O. The catalysed reaction is (2R,3R)-2,3-dihydroxy-3-methylpentanoate = (S)-3-methyl-2-oxopentanoate + H2O. It participates in amino-acid biosynthesis; L-isoleucine biosynthesis; L-isoleucine from 2-oxobutanoate: step 3/4. Its pathway is amino-acid biosynthesis; L-valine biosynthesis; L-valine from pyruvate: step 3/4. In terms of biological role, functions in the biosynthesis of branched-chain amino acids. Catalyzes the dehydration of (2R,3R)-2,3-dihydroxy-3-methylpentanoate (2,3-dihydroxy-3-methylvalerate) into 2-oxo-3-methylpentanoate (2-oxo-3-methylvalerate) and of (2R)-2,3-dihydroxy-3-methylbutanoate (2,3-dihydroxyisovalerate) into 2-oxo-3-methylbutanoate (2-oxoisovalerate), the penultimate precursor to L-isoleucine and L-valine, respectively. The sequence is that of Dihydroxy-acid dehydratase from Aliivibrio fischeri (strain ATCC 700601 / ES114) (Vibrio fischeri).